We begin with the raw amino-acid sequence, 757 residues long: Catalase-peroxidase 2 (757 aa).

The signal sequence occupies residues 1-26 (MKHPLFNQKVLAGFVSMLLISGSAFA). Positions 126–248 (WHSAGTYRTL…LGATHMGLIY (123 aa)) form a cross-link, tryptophyl-tyrosyl-methioninium (Trp-Tyr) (with M-274). Residue His-127 is the Proton acceptor of the active site. A cross-link (tryptophyl-tyrosyl-methioninium (Tyr-Met) (with W-126)) is located at residues 248 to 274 (YVNPEGPKGVPDPLGSAKNIRVAFERM). His-289 lines the heme b pocket.

Belongs to the peroxidase family. Peroxidase/catalase subfamily. As to quaternary structure, homodimer or homotetramer. Heme b is required as a cofactor. Post-translationally, formation of the three residue Trp-Tyr-Met cross-link is important for the catalase, but not the peroxidase activity of the enzyme.

The catalysed reaction is H2O2 + AH2 = A + 2 H2O. The enzyme catalyses 2 H2O2 = O2 + 2 H2O. Its function is as follows. Bifunctional enzyme with both catalase and broad-spectrum peroxidase activity. This Shewanella frigidimarina (strain NCIMB 400) protein is Catalase-peroxidase 2.